We begin with the raw amino-acid sequence, 466 residues long: UDP-N-acetylmuramate--L-alanine ligase (466 aa).

An ATP-binding site is contributed by 117–123; sequence GTHGKTT.

It belongs to the MurCDEF family.

It is found in the cytoplasm. It catalyses the reaction UDP-N-acetyl-alpha-D-muramate + L-alanine + ATP = UDP-N-acetyl-alpha-D-muramoyl-L-alanine + ADP + phosphate + H(+). The protein operates within cell wall biogenesis; peptidoglycan biosynthesis. Functionally, cell wall formation. The sequence is that of UDP-N-acetylmuramate--L-alanine ligase from Streptomyces griseus subsp. griseus (strain JCM 4626 / CBS 651.72 / NBRC 13350 / KCC S-0626 / ISP 5235).